A 390-amino-acid chain; its full sequence is MLNNTSSDFDLIIRQQPNRARVAGGKEKEERPVPVAPSTALAGTLVSSLHRLKDVDNSDGGFFVFGDLSVKIEGEFRLKFTLFEMRKDRVSYLKTVISERFTVSPPKSFPGMMESTHLSRSFADQGVKLRIRKEPRTMLKRSTRPDEFHQPVPTRSPERQSVQIPPSSSYGGYPPAARDYGYYGQQPPVKRHRTSIDYGRQQGLYDVDGRMARQMDPYGQPTAAMYAGQPAAYQTPAAMQTYNTGQVVPDYTAMYPGMQASAGMQASAPMSQIPDPTGQSRSSQQQQAAVGQLMAMNQPGTPTPDSTGAMMAQGYARSGYPPSSTILPPLQRSRDYPQGTNGSARAYFDQTPQANTPILPSQMVNEGDRFSSVTGPTTFNHPDSPNGTPQ.

Positions 3–132 (NNTSSDFDLI…ADQGVKLRIR (130 aa)) constitute a Velvet domain. The span at 137 to 149 (TMLKRSTRPDEFH) shows a compositional bias: basic and acidic residues. 2 disordered regions span residues 137–191 (TMLK…PVKR) and 265–390 (QASA…GTPQ). The segment covering 165 to 175 (PPSSSYGGYPP) has biased composition (low complexity). Residues 273–280 (IPDPTGQS) carry the Nuclear localization signal motif. Polar residues-rich tracts occupy residues 350–364 (QTPQ…SQMV) and 371–390 (SSVT…GTPQ).

This sequence belongs to the velvet family. VosA subfamily. Forms a heterodimeric complex with velB; the formation of the velB-vosA complex is light-dependent. Interacts with velA, velB and velC.

It localises to the nucleus. Component of the velB-VosA heterodimeric complex that plays a dual role in activating genes associated with spore maturation and repressing certain development-associated genes. The complex binds DNA through the DNA-binding domain of vosA that recognizes an 11-nucleotide consensus sequence 5'-CTGGCCGCGGC-3' consisting of two motifs in the promoters of key developmental regulatory genes. In Penicillium rubens (strain ATCC 28089 / DSM 1075 / NRRL 1951 / Wisconsin 54-1255) (Penicillium chrysogenum), this protein is Spore development regulator vosA.